The chain runs to 93 residues: Small ribosomal subunit protein bS20 (93 aa).

The segment at 72–93 (KNTASRKKSRLTRKFNSVYKAS) is disordered. A compositionally biased stretch (basic residues) spans 74–84 (TASRKKSRLTR).

It belongs to the bacterial ribosomal protein bS20 family.

Its function is as follows. Binds directly to 16S ribosomal RNA. The polypeptide is Small ribosomal subunit protein bS20 (Carboxydothermus hydrogenoformans (strain ATCC BAA-161 / DSM 6008 / Z-2901)).